A 224-amino-acid polypeptide reads, in one-letter code: Endonuclease NucS (224 aa).

Belongs to the NucS endonuclease family.

It localises to the cytoplasm. In terms of biological role, cleaves both 3' and 5' ssDNA extremities of branched DNA structures. The chain is Endonuclease NucS from Mycolicibacterium smegmatis (strain ATCC 700084 / mc(2)155) (Mycobacterium smegmatis).